The following is a 389-amino-acid chain: tRNA(Met) cytidine acetate ligase (389 aa).

Residues 8–21, glycine 97, asparagine 153, and arginine 176 contribute to the ATP site; that span reads IAEF…HEYL.

The protein belongs to the TmcAL family.

It is found in the cytoplasm. It catalyses the reaction cytidine(34) in elongator tRNA(Met) + acetate + ATP = N(4)-acetylcytidine(34) in elongator tRNA(Met) + AMP + diphosphate. Functionally, catalyzes the formation of N(4)-acetylcytidine (ac(4)C) at the wobble position of elongator tRNA(Met), using acetate and ATP as substrates. First activates an acetate ion to form acetyladenylate (Ac-AMP) and then transfers the acetyl group to tRNA to form ac(4)C34. This is tRNA(Met) cytidine acetate ligase from Lactococcus lactis subsp. lactis (strain IL1403) (Streptococcus lactis).